Consider the following 378-residue polypeptide: Alanine dehydrogenase (378 aa).

Substrate is bound by residues Arg-15 and Lys-74. The active-site Proton donor/acceptor is His-95. Residues Ser-132, Val-176–Val-177, Asp-196, Ser-218, Val-237–Leu-238, Val-265–Asp-268, and Val-297–Met-300 contribute to the NAD(+) site. The Proton donor/acceptor role is filled by Asp-268.

The protein belongs to the AlaDH/PNT family. In terms of assembly, homohexamer. Trimer of dimer.

The protein resides in the cytoplasm. The catalysed reaction is L-alanine + NAD(+) + H2O = pyruvate + NH4(+) + NADH + H(+). It functions in the pathway amino-acid degradation; L-alanine degradation via dehydrogenase pathway; NH(3) and pyruvate from L-alanine: step 1/1. Catalyzes the reversible oxidative deamination of L-alanine to pyruvate. Oxidative deamination proceeds through a sequential, ordered ternary-binary mechanism, where NAD(+) binds first followed by L-alanine; the products are released in the order ammonia, pyruvate and NADH. Disruption blocks sporulation probably in stage V; 20-30% sporulation can be restored if the media is supplemented with pyruvate, suggesting lack of pyruvate blocks sporulation. Thus it is a key factor in the assimilation of L-alanine as an energy source via the tricarboxylic acid cycle during sporulation. This chain is Alanine dehydrogenase, found in Bacillus subtilis (strain 168).